Consider the following 275-residue polypeptide: 2,3,4,5-tetrahydropyridine-2,6-dicarboxylate N-succinyltransferase (275 aa).

Substrate contacts are provided by R106 and D143.

Belongs to the transferase hexapeptide repeat family. In terms of assembly, homotrimer.

The protein resides in the cytoplasm. The enzyme catalyses (S)-2,3,4,5-tetrahydrodipicolinate + succinyl-CoA + H2O = (S)-2-succinylamino-6-oxoheptanedioate + CoA. It participates in amino-acid biosynthesis; L-lysine biosynthesis via DAP pathway; LL-2,6-diaminopimelate from (S)-tetrahydrodipicolinate (succinylase route): step 1/3. This is 2,3,4,5-tetrahydropyridine-2,6-dicarboxylate N-succinyltransferase from Paraburkholderia xenovorans (strain LB400).